Here is a 519-residue protein sequence, read N- to C-terminus: Glucose-1-phosphate adenylyltransferase large subunit 3, chloroplastic/amyloplastic (519 aa).

Residues 1-74 (MQFSSVFPLE…DAGPDTLHVR (74 aa)) constitute a chloroplast transit peptide.

It belongs to the bacterial/plant glucose-1-phosphate adenylyltransferase family. Heterotetramer composed of two small and two large subunits. Expressed in stems.

It localises to the plastid. The protein localises to the chloroplast. The catalysed reaction is alpha-D-glucose 1-phosphate + ATP + H(+) = ADP-alpha-D-glucose + diphosphate. It functions in the pathway glycan biosynthesis; starch biosynthesis. With respect to regulation, activated by 3'phosphoglycerate, inhibited by orthophosphate. Allosteric regulation. In terms of biological role, involved in synthesis of starch. Catalyzes the synthesis of ADP-glucose, a molecule that serves as an activated glycosyl donor for alpha-1,4-glucan synthesis. Essential for starch synthesis in leaf chloroplasts. The sequence is that of Glucose-1-phosphate adenylyltransferase large subunit 3, chloroplastic/amyloplastic from Oryza sativa subsp. japonica (Rice).